The following is a 776-amino-acid chain: Protein STRUBBELIG-RECEPTOR FAMILY 3 (776 aa).

The N-terminal stretch at 1-29 (MAAKRSIYCLLLLPLLLSLLIWIPSISLA) is a signal peptide. Residues 30-35 (ATNPDD) are Cytoplasmic-facing. A helical membrane pass occupies residues 36-56 (VAAINGLFAALGAPVLPGWIA). Over 57–316 (SGGDPCGEAW…KGKNSSHTKK (260 aa)) the chain is Extracellular. N-linked (GlcNAc...) asparagine glycosylation occurs at Asn-72. 6 LRR repeats span residues 99–120 (SIRG…TLPV), 121–143 (TLQH…LGTL), 145–167 (FLND…FQNL), 169–191 (GLIN…MENL), 193–215 (TLTT…QGLP), and 216–236 (LQDL…KLLS). N-linked (GlcNAc...) asparagine glycosylation occurs at Asn-179. Asn-248 and Asn-253 each carry an N-linked (GlcNAc...) asparagine glycan. The disordered stretch occupies residues 251–311 (MINSTSTAPS…SSENSKGKNS (61 aa)). Over residues 254–268 (STSTAPSLSPSLSPT) the composition is skewed to low complexity. Residues 269–284 (KPAPTRPFSGVPPPPN) are compositionally biased toward pro residues. A compositionally biased stretch (low complexity) spans 298–309 (SEGSSSENSKGK). Asn-310 is a glycosylation site (N-linked (GlcNAc...) asparagine). A helical membrane pass occupies residues 317-337 (IILIAFAGVLVFIILVLAILL). At 338-776 (LLPKCARRRE…RHGSGDSTAD (439 aa)) the chain is on the cytoplasmic side. Residues 355–440 (PHQVGADRGS…PPPPPPPPPP (86 aa)) are disordered. Over residues 381–407 (RSEKVQREPFKKAGEEPKVLHDLERLR) the composition is skewed to basic and acidic residues. Residues 426-440 (MPPPPPPPPPPPPPP) show a composition bias toward pro residues. The region spanning 485–763 (FAQENLIGSG…EVVQDLLDMI (279 aa)) is the Protein kinase domain. ATP-binding positions include 491 to 499 (IGSGMLGSV) and Lys-513.

This sequence belongs to the protein kinase superfamily. Ser/Thr protein kinase family. Expressed in seedlings, roots, stems, leaves, flowers and siliques.

Its subcellular location is the membrane. Functionally, not essential for epidermal patterning and not redundant with STRUBBELIG. The polypeptide is Protein STRUBBELIG-RECEPTOR FAMILY 3 (SRF3) (Arabidopsis thaliana (Mouse-ear cress)).